We begin with the raw amino-acid sequence, 372 residues long: E3 ubiquitin-protein ligase RNF34 (372 aa).

An FYVE-type zinc finger spans residues 56–107 (EGPNIVCKACGLSFSVFRKKHVCCDCKKDFCSVCSVLQENLRRCSTCHLLQE). One can recognise an SAP 1 domain in the interval 115 to 134 (LMRLKVKDLRQYLILRNIPT). A Phosphoserine modification is found at S169. The tract at residues 194–252 (QGELMDGDQTSRSGVPAQVQSEITSANTEDDDDDDDEDDDDEEENAEDQNPGLSKERVR) is disordered. The segment covering 201-220 (DQTSRSGVPAQVQSEITSAN) has biased composition (polar residues). Residues 221-240 (TEDDDDDDDEDDDDEEENAE) are compositionally biased toward acidic residues. A phosphoserine mark is found at S254 and S256. One can recognise an SAP 2 domain in the interval 264-278 (VEGMSVRQLKEILAR). The segment at 325–360 (CRICMDAVIDCVLLECGHMVTCTKCGKRMSECPICR) adopts an RING-type zinc-finger fold.

In terms of assembly, interacts with CASP8 and CASP10. Interacts with p53/TP53; involved in p53/TP53 ubiquitination. Interacts (via RING-type zinc finger) with MDM2; the interaction stabilizes MDM2. Interacts (via RING-type zinc finger) with PPARGC1A. Interacts with NOD1. In terms of processing, autoubiquitinated (in vitro). Proteolytically cleaved by caspases upon induction of apoptosis by TNF.

It localises to the cell membrane. It is found in the endomembrane system. Its subcellular location is the nucleus. The protein resides in the nucleus speckle. The protein localises to the cytoplasm. It localises to the cytosol. It carries out the reaction S-ubiquitinyl-[E2 ubiquitin-conjugating enzyme]-L-cysteine + [acceptor protein]-L-lysine = [E2 ubiquitin-conjugating enzyme]-L-cysteine + N(6)-ubiquitinyl-[acceptor protein]-L-lysine.. It functions in the pathway protein modification; protein ubiquitination. In terms of biological role, E3 ubiquitin-protein ligase that regulates several biological processes through the ubiquitin-mediated proteasomal degradation of various target proteins. Ubiquitinates the caspases CASP8 and CASP10, promoting their proteasomal degradation, to negatively regulate cell death downstream of death domain receptors in the extrinsic pathway of apoptosis. May mediate 'Lys-48'-linked polyubiquitination of RIPK1 and its subsequent proteasomal degradation thereby indirectly regulating the tumor necrosis factor-mediated signaling pathway. Negatively regulates p53/TP53 through its direct ubiquitination and targeting to proteasomal degradation. Indirectly, may also negatively regulate p53/TP53 through ubiquitination and degradation of SFN. Mediates PPARGC1A proteasomal degradation probably through ubiquitination thereby indirectly regulating the metabolism of brown fat cells. Possibly involved in innate immunity, through 'Lys-48'-linked polyubiquitination of NOD1 and its subsequent proteasomal degradation. The chain is E3 ubiquitin-protein ligase RNF34 (RNF34) from Pongo abelii (Sumatran orangutan).